The following is a 190-amino-acid chain: uncharacterized protein (190 aa).

This is an uncharacterized protein from Acidianus hospitalis (AFV-1).